Consider the following 651-residue polypeptide: Acetyl-coenzyme A synthetase (651 aa).

CoA contacts are provided by residues 189–192 (RGGK), Thr-311, and Asn-335. ATP is bound by residues 387-389 (GEP), 411-416 (DTWWQT), Asp-500, and Arg-515. Position 523 (Ser-523) interacts with CoA. Arg-526 is an ATP binding site. Mg(2+)-binding residues include Val-537, His-539, and Val-542. Arg-586 is a CoA binding site. Residue Lys-611 is modified to N6-acetyllysine.

Belongs to the ATP-dependent AMP-binding enzyme family. Mg(2+) serves as cofactor. Post-translationally, acetylated. Deacetylation by the SIR2-homolog deacetylase activates the enzyme.

It carries out the reaction acetate + ATP + CoA = acetyl-CoA + AMP + diphosphate. Catalyzes the conversion of acetate into acetyl-CoA (AcCoA), an essential intermediate at the junction of anabolic and catabolic pathways. AcsA undergoes a two-step reaction. In the first half reaction, AcsA combines acetate with ATP to form acetyl-adenylate (AcAMP) intermediate. In the second half reaction, it can then transfer the acetyl group from AcAMP to the sulfhydryl group of CoA, forming the product AcCoA. The polypeptide is Acetyl-coenzyme A synthetase (Brucella melitensis biotype 1 (strain ATCC 23456 / CCUG 17765 / NCTC 10094 / 16M)).